The following is a 328-amino-acid chain: Anthranilate phosphoribosyltransferase (328 aa).

Residues Gly79, 82–83, Thr87, 89–92, 107–115, and Ser119 each bind 5-phospho-alpha-D-ribose 1-diphosphate; these read GD, NIST, and KHGNYAVSS. An anthranilate-binding site is contributed by Gly79. Position 91 (Ser91) interacts with Mg(2+). Asn110 is an anthranilate binding site. Residue Arg165 coordinates anthranilate. Mg(2+)-binding residues include Asp223 and Glu224.

The protein belongs to the anthranilate phosphoribosyltransferase family. Homodimer. The cofactor is Mg(2+).

The catalysed reaction is N-(5-phospho-beta-D-ribosyl)anthranilate + diphosphate = 5-phospho-alpha-D-ribose 1-diphosphate + anthranilate. Its pathway is amino-acid biosynthesis; L-tryptophan biosynthesis; L-tryptophan from chorismate: step 2/5. Catalyzes the transfer of the phosphoribosyl group of 5-phosphorylribose-1-pyrophosphate (PRPP) to anthranilate to yield N-(5'-phosphoribosyl)-anthranilate (PRA). The chain is Anthranilate phosphoribosyltransferase from Cytophaga hutchinsonii (strain ATCC 33406 / DSM 1761 / CIP 103989 / NBRC 15051 / NCIMB 9469 / D465).